The primary structure comprises 400 residues: 3-phenylpropionate/cinnamic acid dioxygenase ferredoxin--NAD(+) reductase component (400 aa).

T5–D36 serves as a coordination point for FAD. S146–E174 lines the NAD(+) pocket.

This sequence belongs to the bacterial ring-hydroxylating dioxygenase ferredoxin reductase family. This dioxygenase system consists of four proteins: the two subunits of the hydroxylase component (HcaE and HcaF), a ferredoxin (HcaC) and a ferredoxin reductase (HcaD). Requires FAD as cofactor.

The catalysed reaction is 2 reduced [2Fe-2S]-[ferredoxin] + NAD(+) + H(+) = 2 oxidized [2Fe-2S]-[ferredoxin] + NADH. The protein operates within aromatic compound metabolism; 3-phenylpropanoate degradation. Functionally, part of the multicomponent 3-phenylpropionate dioxygenase, that converts 3-phenylpropionic acid (PP) and cinnamic acid (CI) into 3-phenylpropionate-dihydrodiol (PP-dihydrodiol) and cinnamic acid-dihydrodiol (CI-dihydrodiol), respectively. This chain is 3-phenylpropionate/cinnamic acid dioxygenase ferredoxin--NAD(+) reductase component, found in Escherichia coli (strain 55989 / EAEC).